The following is a 36-amino-acid chain: MSDIN-like toxin proprotein 10 (36 aa).

A propeptide spanning residues methionine 1–proline 10 is cleaved from the precursor. Residues glycine 11–proline 19 constitute a cross-link (cyclopeptide (Gly-Pro)). Residues cysteine 20 to cysteine 36 constitute a propeptide that is removed on maturation.

The protein belongs to the MSDIN fungal toxin family. In terms of processing, processed by the macrocyclase-peptidase enzyme POPB to yield a toxic cyclic nonapeptide. POPB first removes 10 residues from the N-terminus. Conformational trapping of the remaining peptide forces the enzyme to release this intermediate rather than proceed to macrocyclization. The enzyme rebinds the remaining peptide in a different conformation and catalyzes macrocyclization of the N-terminal 9 residues.

Probable toxin that belongs to the MSDIN-like toxin family responsible for a large number of food poisoning cases and deaths. This Amanita bisporigera (Destroying angel) protein is MSDIN-like toxin proprotein 10.